The chain runs to 422 residues: Phthiocerol/phthiodiolone dimycocerosyl transferase (422 aa).

Histidine 124 functions as the Proton acceptor in the catalytic mechanism.

It belongs to the acyltransferase PapA5 family. In terms of assembly, monomer. Interacts directly with the acyl carrier protein (ACP) domain of the mycocerosic acid synthase (mas) protein.

The catalysed reaction is 2 a mycocerosyl-[mycocerosic acid synthase] + a phthiocerol = a dimycocerosyl phthiocerol + 2 holo-[mycocerosic acid synthase].. The enzyme catalyses 2 a mycocerosyl-[mycocerosic acid synthase] + a phthiodiolone = a dimycocerosyl phthiodiolone + 2 holo-[mycocerosic acid synthase].. It catalyses the reaction 2 a mycocerosyl-[mycocerosic acid synthase] + a phenolphthiocerol = a dimycocerosyl phenolphthiocerol + 2 holo-[mycocerosic acid synthase].. Catalyzes diesterification of phthiocerol, phthiodiolone, and phenolphthiocerol with mycocerosic acids, the final step in the phthiocerol, phthiodiolone and phenolphthiocerol dimycocerosate esters (PDIM) synthesis. Can directly transfer the mycocerosate bound to the mycocerosic acid synthase (mas) onto the substrate alcohols. The protein is Phthiocerol/phthiodiolone dimycocerosyl transferase (papA5) of Mycobacterium tuberculosis (strain ATCC 25177 / H37Ra).